The sequence spans 391 residues: Transforming growth factor beta-1 proprotein (391 aa).

The first 18 residues, 1–18, serve as a signal peptide directing secretion; the sequence is MDPSPLLALLLLLGAARA. Positions 19–63 are straightjacket domain; it reads LSTCQRLDLEAAKKKRIEAVRGQILSKLRLTAPPPASETPPRPLP. An arm domain region spans residues 64 to 270; that stretch reads DDVRALYNST…ALPAERANEL (207 aa). N-linked (GlcNAc...) asparagine glycosylation is found at Asn71, Asn126, and Asn171. The tract at residues 221–249 is bowtie tail; the sequence is EMGPGHADEMRISIEGFEQQRGDMQSIAK. Positions 241 to 243 match the Cell attachment site motif; sequence RGD. 4 cysteine pairs are disulfide-bonded: Cys284–Cys295, Cys294–Cys357, Cys323–Cys388, and Cys327–Cys390.

Belongs to the TGF-beta family. Latency-associated peptide: Homodimer; disulfide-linked. Latency-associated peptide: Interacts with Transforming growth factor beta-1 (TGF-beta-1) chain; interaction is non-covalent and maintains (TGF-beta-1) in a latent state; each Latency-associated peptide (LAP) monomer interacts with TGF-beta-1 in the other monomer. Transforming growth factor beta-1: Homodimer; disulfide-linked. Transforming growth factor beta-1: Interacts with TGF-beta receptors (TGFBR1 and TGFBR2), leading to signal transduction. Post-translationally, transforming growth factor beta-1 proprotein: The precursor proprotein is cleaved in the Golgi apparatus to form Transforming growth factor beta-1 (TGF-beta-1) and Latency-associated peptide (LAP) chains, which remain non-covalently linked, rendering TGF-beta-1 inactive.

It is found in the secreted. It localises to the extracellular space. The protein resides in the extracellular matrix. Transforming growth factor beta-1 proprotein: Precursor of the Latency-associated peptide (LAP) and Transforming growth factor beta-1 (TGF-beta-1) chains, which constitute the regulatory and active subunit of TGF-beta-1, respectively. Functionally, required to maintain the Transforming growth factor beta-1 (TGF-beta-1) chain in a latent state during storage in extracellular matrix. Associates non-covalently with TGF-beta-1 and regulates its activation via interaction with 'milieu molecules', such as LTBP1, LRRC32/GARP and LRRC33/NRROS, that control activation of TGF-beta-1. Interaction with integrins (ITGAV:ITGB6 or ITGAV:ITGB8) results in distortion of the Latency-associated peptide chain and subsequent release of the active TGF-beta-1. In terms of biological role, transforming growth factor beta-1: Multifunctional protein that regulates the growth and differentiation of various cell types and is involved in various processes, such as normal development, immune function, microglia function and responses to neurodegeneration. Activation into mature form follows different steps: following cleavage of the proprotein in the Golgi apparatus, Latency-associated peptide (LAP) and Transforming growth factor beta-1 (TGF-beta-1) chains remain non-covalently linked rendering TGF-beta-1 inactive during storage in extracellular matrix. At the same time, LAP chain interacts with 'milieu molecules', such as LTBP1, LRRC32/GARP and LRRC33/NRROS that control activation of TGF-beta-1 and maintain it in a latent state during storage in extracellular milieus. TGF-beta-1 is released from LAP by integrins (ITGAV:ITGB6 or ITGAV:ITGB8): integrin-binding to LAP stabilizes an alternative conformation of the LAP bowtie tail and results in distortion of the LAP chain and subsequent release of the active TGF-beta-1. Once activated following release of LAP, TGF-beta-1 acts by binding to TGF-beta receptors (TGFBR1 and TGFBR2), which transduce signal. While expressed by many cells types, TGF-beta-1 only has a very localized range of action within cell environment thanks to fine regulation of its activation by Latency-associated peptide chain (LAP) and 'milieu molecules'. Plays an important role in bone remodeling: acts as a potent stimulator of osteoblastic bone formation. Can promote either T-helper 17 cells (Th17) or regulatory T-cells (Treg) lineage differentiation in a concentration-dependent manner. Can induce epithelial-to-mesenchymal transition (EMT) and cell migration in various cell types. This is Transforming growth factor beta-1 proprotein (TGFB1) from Gallus gallus (Chicken).